The primary structure comprises 486 residues: Inosine-5'-monophosphate dehydrogenase (486 aa).

CBS domains lie at 99–154 and 156–215; these read IVED…LVKE and MTKE…VRDE. NAD(+) contacts are provided by residues D247 and 294–296; that span reads GIG. G296 and G298 together coordinate K(+). S299 serves as a coordination point for IMP. C301 provides a ligand contact to K(+). Residue C301 is the Thioimidate intermediate of the active site. IMP-binding positions include 334-336, 357-358, and 381-385; these read DGG, GN, and YRGMG. The active-site Proton acceptor is the R397. E412 is a binding site for IMP. E466, S467, and H468 together coordinate K(+).

This sequence belongs to the IMPDH/GMPR family. As to quaternary structure, homotetramer. K(+) is required as a cofactor.

It carries out the reaction IMP + NAD(+) + H2O = XMP + NADH + H(+). The protein operates within purine metabolism; XMP biosynthesis via de novo pathway; XMP from IMP: step 1/1. Its activity is regulated as follows. Mycophenolic acid (MPA) is a non-competitive inhibitor that prevents formation of the closed enzyme conformation by binding to the same site as the amobile flap. In contrast, mizoribine monophosphate (MZP) is a competitive inhibitor that induces the closed conformation. MPA is a potent inhibitor of mammalian IMPDHs but a poor inhibitor of the bacterial enzymes. MZP is a more potent inhibitor of bacterial IMPDH. In terms of biological role, catalyzes the conversion of inosine 5'-phosphate (IMP) to xanthosine 5'-phosphate (XMP), the first committed and rate-limiting step in the de novo synthesis of guanine nucleotides, and therefore plays an important role in the regulation of cell growth. The polypeptide is Inosine-5'-monophosphate dehydrogenase (Pyrococcus horikoshii (strain ATCC 700860 / DSM 12428 / JCM 9974 / NBRC 100139 / OT-3)).